A 207-amino-acid chain; its full sequence is MPTMNRSRRLALLCLGAPLLLAACASVAPSRGFDAGEGSASRHYTGRFSANYVRYGRDEGVQGSFRWEEQGRNVRLDLLSPLGQTLAVVTATPSGATLDLPNKPPRNAPEVDSLLEEALGFALPVAGMRDWLHGRPAPGRPAKSTRDTEGRLATLAQDGWSVRYVAWQEVPSASQAPAPRPRRIDLEREGGPTPLAVKLVIDPEEAP.

The signal sequence occupies residues 1 to 23; that stretch reads MPTMNRSRRLALLCLGAPLLLAA. Residue Cys24 is the site of N-palmitoyl cysteine attachment. Cys24 is lipidated: S-diacylglycerol cysteine. Residues 171-207 form a disordered region; the sequence is PSASQAPAPRPRRIDLEREGGPTPLAVKLVIDPEEAP.

Belongs to the LolB family. As to quaternary structure, monomer.

The protein localises to the cell outer membrane. Plays a critical role in the incorporation of lipoproteins in the outer membrane after they are released by the LolA protein. The chain is Outer-membrane lipoprotein LolB from Cupriavidus pinatubonensis (strain JMP 134 / LMG 1197) (Cupriavidus necator (strain JMP 134)).